The chain runs to 492 residues: Catalase isozyme 2 (492 aa).

Catalysis depends on residues H65 and N138. Residue Y348 participates in heme binding.

Belongs to the catalase family. As to quaternary structure, homotetramer. It depends on heme as a cofactor.

It localises to the peroxisome. The enzyme catalyses 2 H2O2 = O2 + 2 H2O. Its function is as follows. Occurs in almost all aerobically respiring organisms and serves to protect cells from the toxic effects of hydrogen peroxide. The sequence is that of Catalase isozyme 2 (CAT2) from Nicotiana plumbaginifolia (Leadwort-leaved tobacco).